A 377-amino-acid chain; its full sequence is Anhydro-N-acetylmuramic acid kinase (377 aa).

12–19 (GTSLDGID) provides a ligand contact to ATP.

This sequence belongs to the anhydro-N-acetylmuramic acid kinase family.

The enzyme catalyses 1,6-anhydro-N-acetyl-beta-muramate + ATP + H2O = N-acetyl-D-muramate 6-phosphate + ADP + H(+). Its pathway is amino-sugar metabolism; 1,6-anhydro-N-acetylmuramate degradation. It functions in the pathway cell wall biogenesis; peptidoglycan recycling. Catalyzes the specific phosphorylation of 1,6-anhydro-N-acetylmuramic acid (anhMurNAc) with the simultaneous cleavage of the 1,6-anhydro ring, generating MurNAc-6-P. Is required for the utilization of anhMurNAc either imported from the medium or derived from its own cell wall murein, and thus plays a role in cell wall recycling. This is Anhydro-N-acetylmuramic acid kinase from Methylorubrum populi (strain ATCC BAA-705 / NCIMB 13946 / BJ001) (Methylobacterium populi).